The chain runs to 147 residues: Secreted hemophore CSA2 (147 aa).

The N-terminal stretch at 1-20 (MKFSTILAIPFAIAFANAAA) is a signal peptide. The 112-residue stretch at 34–145 (NPYTIYPPVP…SALDAAATAT (112 aa)) folds into the CFEM domain. 4 disulfide bridges follow: C62–C102, C66–C97, C76–C83, and C85–C118. D80 is a heme binding site.

The protein belongs to the RBT5 family. Homodimer. The possibility of a transient honotrimer assembly of the holo protein is not ruled out.

Its subcellular location is the secreted. Secreted heme-binding protein involved in the utilization of iron from human hemoglobin during hyphal growth. May also play a role in non-hemoglobin iron utilization. Heme transfer occurs between PGA7, RBT5 and CSA2 supporting a model in which the 3 CFEM proteins cooperate in a heme-acquisition system and form a cross-cell wall heme-transfer cascade. The ability to acquire iron from host tissues is a major virulence factor of pathogenic microorganisms. This Candida albicans (strain SC5314 / ATCC MYA-2876) (Yeast) protein is Secreted hemophore CSA2 (CSA2).